A 369-amino-acid polypeptide reads, in one-letter code: Quinolinate synthase (369 aa).

Positions 47 and 64 each coordinate iminosuccinate. C111 serves as a coordination point for [4Fe-4S] cluster. Iminosuccinate contacts are provided by residues 142 to 144 and S163; that span reads YVN. C231 is a [4Fe-4S] cluster binding site. Iminosuccinate is bound by residues 257–259 and T274; that span reads HPE. C321 contributes to the [4Fe-4S] cluster binding site.

The protein belongs to the quinolinate synthase family. Type 3 subfamily. The cofactor is [4Fe-4S] cluster.

Its subcellular location is the cytoplasm. The catalysed reaction is iminosuccinate + dihydroxyacetone phosphate = quinolinate + phosphate + 2 H2O + H(+). The protein operates within cofactor biosynthesis; NAD(+) biosynthesis; quinolinate from iminoaspartate: step 1/1. In terms of biological role, catalyzes the condensation of iminoaspartate with dihydroxyacetone phosphate to form quinolinate. The polypeptide is Quinolinate synthase (Bacillus licheniformis (strain ATCC 14580 / DSM 13 / JCM 2505 / CCUG 7422 / NBRC 12200 / NCIMB 9375 / NCTC 10341 / NRRL NRS-1264 / Gibson 46)).